An 801-amino-acid chain; its full sequence is Disks large homolog 4 (801 aa).

Residues 4 to 60 enclose the L27 domain; it reads KREDTERALQAMEACQSAGDEGFRTRAERLLTIFQSDLFQALLDIQEFYELTVFENQ. PDZ domains follow at residues 153–240 and 248–335; these read EITL…LRHK and ELKL…AKTL. The segment at 339-373 is disordered; the sequence is HHQDAYNPPDITSSYSPHMDMSDYPQALSPSSPRR. The PDZ 3 domain occupies 393 to 474; that stretch reads RVVIHRGSTG…TVTIITQYRP (82 aa). Residues 507–577 enclose the SH3 domain; sequence KRSFFIRALF…PSKRRVERKE (71 aa). Residues 610–786 form the Guanylate kinase-like domain; sequence ARPVIILGPS…IYHHVKSVIE (177 aa).

It belongs to the MAGUK family. In terms of processing, ubiquitinated by MDM2 in response to NMDA receptor activation, leading to proteasome-mediated degradation of DLG4 which is required for AMPA receptor endocytosis. Palmitoylated. Palmitoylation is required for targeting to postsynaptic density, plasma membrane and synapses.

Its subcellular location is the cell membrane. It is found in the postsynaptic density. It localises to the synapse. Its function is as follows. Postsynaptic scaffolding protein that plays a critical role in synaptogenesis and synaptic plasticity by providing a platform for the postsynaptic clustering of crucial synaptic proteins. This Danio rerio (Zebrafish) protein is Disks large homolog 4 (dlg4).